The chain runs to 103 residues: Small ribosomal subunit protein uS10 (103 aa).

It belongs to the universal ribosomal protein uS10 family. As to quaternary structure, part of the 30S ribosomal subunit.

Involved in the binding of tRNA to the ribosomes. This chain is Small ribosomal subunit protein uS10, found in Campylobacter lari (strain RM2100 / D67 / ATCC BAA-1060).